A 204-amino-acid chain; its full sequence is Pyrrolidone-carboxylate peptidase (204 aa).

Residues glutamate 80, cysteine 142, and histidine 165 contribute to the active site.

Belongs to the peptidase C15 family. In terms of assembly, homotetramer.

It is found in the cytoplasm. The catalysed reaction is Release of an N-terminal pyroglutamyl group from a polypeptide, the second amino acid generally not being Pro.. Its function is as follows. Removes 5-oxoproline from various penultimate amino acid residues except L-proline. The protein is Pyrrolidone-carboxylate peptidase of Lysinibacillus sphaericus (strain C3-41).